The primary structure comprises 594 residues: 4-alpha-glucanotransferase DPE1, chloroplastic/amyloplastic (594 aa).

The transit peptide at 1 to 37 (MATLSLPLPHLTQAIPARARPRPRPLRGIPARLLSCR) directs the protein to the chloroplast.

This sequence belongs to the disproportionating enzyme family.

Its subcellular location is the plastid. The protein resides in the chloroplast. It is found in the amyloplast. It carries out the reaction Transfers a segment of a (1-&gt;4)-alpha-D-glucan to a new position in an acceptor, which may be glucose or a (1-&gt;4)-alpha-D-glucan.. Its function is as follows. Chloroplastic alpha-glucanotransferase involved in maltotriose metabolism. The protein is 4-alpha-glucanotransferase DPE1, chloroplastic/amyloplastic (DPE1) of Oryza sativa subsp. japonica (Rice).